The sequence spans 564 residues: Potassium-transporting ATPase potassium-binding subunit (564 aa).

A run of 10 helical transmembrane segments spans residues 4-24 (HEIL…PFLG), 67-87 (TLAL…ILML), 135-155 (VGLT…LVAL), 179-199 (LYVL…QGVP), 258-278 (FEVA…GHYV), 286-306 (AILG…LWAE), 376-396 (IFGG…IAVF), 420-440 (LLVF…AIAA), 487-507 (LMIG…ILAI), and 528-548 (GPLF…LTFL).

This sequence belongs to the KdpA family. In terms of assembly, the system is composed of three essential subunits: KdpA, KdpB and KdpC.

It is found in the cell inner membrane. Its function is as follows. Part of the high-affinity ATP-driven potassium transport (or Kdp) system, which catalyzes the hydrolysis of ATP coupled with the electrogenic transport of potassium into the cytoplasm. This subunit binds the periplasmic potassium ions and delivers the ions to the membrane domain of KdpB through an intramembrane tunnel. This is Potassium-transporting ATPase potassium-binding subunit from Pseudomonas aeruginosa (strain ATCC 15692 / DSM 22644 / CIP 104116 / JCM 14847 / LMG 12228 / 1C / PRS 101 / PAO1).